The primary structure comprises 288 residues: MATFFGEVQSVFSRAVDEEEEDEDDDEEEEEDREIIAELERKREVRVTWNPELTAAIESSPGKRLPCSSVILSVGDNATGFVSSYILSSGSWEVAGSVTLWNERCRDCNVRKDFLPAPSSCTFYRSITDPTVLLCQCNCHVAEDQLFQWCEKVFGSLEKSSLKVTVLSTCPVSEYKTPESTYSLPVPFLKALRTSEYREEVPCPLLEQPNIVDGLPAAVLSHCQVLGIPAVFYQCYTDISKLDSVTIKAFRPLLSSGSLSRLAADSANIQETLRKTVKLNEIQSNLYI.

Residues 1–33 are disordered; the sequence is MATFFGEVQSVFSRAVDEEEEDEDDDEEEEEDR. Residues 17–33 show a composition bias toward acidic residues; it reads DEEEEDEDDDEEEEEDR.

Belongs to the PSMG1 family. Forms a heterodimer with psmg2. Post-translationally, degraded by the proteasome upon completion of 20S proteasome maturation.

It localises to the cytoplasm. The protein localises to the endoplasmic reticulum. Chaperone protein which promotes assembly of the 20S proteasome as part of a heterodimer with psmg2. This Xenopus laevis (African clawed frog) protein is Proteasome assembly chaperone 1.